The chain runs to 493 residues: Glycerol kinase 2 (493 aa).

Serine 12 is an ADP binding site. Residues serine 12 and threonine 13 each coordinate ATP. Serine 12 is a binding site for sn-glycerol 3-phosphate. An ADP-binding site is contributed by lysine 16. Residues arginine 82, glutamate 83, tyrosine 134, and aspartate 243 each coordinate sn-glycerol 3-phosphate. Glycerol-binding residues include arginine 82, glutamate 83, tyrosine 134, aspartate 243, and glutamine 244. ADP is bound by residues threonine 265 and glycine 308. Positions 265, 308, and 312 each coordinate ATP. Position 413 (asparagine 413) interacts with ADP.

This sequence belongs to the FGGY kinase family. In terms of assembly, homotetramer and homodimer (in equilibrium).

The catalysed reaction is glycerol + ATP = sn-glycerol 3-phosphate + ADP + H(+). Its pathway is polyol metabolism; glycerol degradation via glycerol kinase pathway; sn-glycerol 3-phosphate from glycerol: step 1/1. Activated by phosphorylation and inhibited by fructose 1,6-bisphosphate (FBP). Its function is as follows. Key enzyme in the regulation of glycerol uptake and metabolism. Catalyzes the phosphorylation of glycerol to yield sn-glycerol 3-phosphate. The chain is Glycerol kinase 2 from Clostridium tetani (strain Massachusetts / E88).